The chain runs to 483 residues: MLPRLAKSSLIQQVRGVSAIANAEPSGPSISTSIPGPKSKALKQEMDKVHQTTSVRFHVDYEKSFGNYVVDADGNALLDVYTQISSLPLGYNHPDLVKVASQPHLITSLVSRPALGSFPRTDFADGISHALTSIAPKGLKAVQTMLCGTSANENAIKTAFIWYQAQRRGGLGPDALHLESCMNQQKPGTPNLSVMGFEGAFHGRSLCMLSVTRSKPIHKVDIPAFDWPIAKFPRYKYPLDQNVAYNKKQDQECLADVEAKISEWKRRDNDVAAIIVEPIQAEGGDHYGSPAFFQGLRDITSKHGIVFIVDEVQTGGGATGDIWAHDHWNLSSPPDMVTFSKKLLTGGYFYGEHLRVKEAYRIYNTWMGDPTKLLLLEKAVEVIKRDGLIEQSREVGAEFQKRLGELQASSGGKLDQARGRGTFAAVDFPSGSLRDKFVDLAISNGLHCGGCGDRSLRFRPSLVYTKKHLDLTFDLLDKTLKGL.

Residue 148–149 coordinates pyridoxal 5'-phosphate; sequence GT. Residue R204 coordinates substrate. K341 is subject to N6-(pyridoxal phosphate)lysine. Pyridoxal 5'-phosphate is bound at residue T365.

It belongs to the class-III pyridoxal-phosphate-dependent aminotransferase family. Homodimer. The cofactor is pyridoxal 5'-phosphate.

It localises to the mitochondrion matrix. The catalysed reaction is 4-aminobutanoate + 2-oxoglutarate = succinate semialdehyde + L-glutamate. It carries out the reaction (S)-3-amino-2-methylpropanoate + 2-oxoglutarate = 2-methyl-3-oxopropanoate + L-glutamate. This Caenorhabditis elegans protein is Probable 4-aminobutyrate aminotransferase, mitochondrial (gta-1).